A 475-amino-acid chain; its full sequence is Coagulation factor X (475 aa).

Residues Met-1–Ala-20 form the signal peptide. A propeptide spanning residues Glu-21 to Arg-40 is cleaved from the precursor. Residues Ala-41–Val-85 form the Gla domain. 11 positions are modified to 4-carboxyglutamate: Glu-46, Glu-47, Glu-54, Glu-56, Glu-59, Glu-60, Glu-65, Glu-66, Glu-69, Glu-72, and Glu-79. Cysteines 57 and 62 form a disulfide. The region spanning Asp-86 to Glu-122 is the EGF-like 1; calcium-binding domain. Intrachain disulfides connect Cys-90/Cys-101, Cys-95/Cys-110, Cys-112/Cys-121, Cys-129/Cys-140, Cys-136/Cys-152, Cys-154/Cys-167, Cys-175/Cys-348, Cys-247/Cys-252, Cys-267/Cys-283, Cys-396/Cys-410, and Cys-421/Cys-449. Asp-103 is modified ((3R)-3-hydroxyaspartate). Positions Ile-125–Val-168 constitute an EGF-like 2 domain. Residues Ser-186–Arg-240 constitute a propeptide, activation peptide. Residues Asn-196, Asn-207, and Asn-228 are each glycosylated (N-linked (GlcNAc...) asparagine). The segment at Thr-216–Val-237 is disordered. Residues Ile-241–Arg-473 form the Peptidase S1 domain. Residue His-282 is the Charge relay system of the active site. Asn-285 is a glycosylation site (N-linked (GlcNAc...) asparagine). Asp-328 acts as the Charge relay system in catalysis. Catalysis depends on Ser-425, which acts as the Charge relay system.

It belongs to the peptidase S1 family. As to quaternary structure, the two chains are formed from a single-chain precursor by the excision of two Arg residues and are held together by 1 or more disulfide bonds. Post-translationally, the vitamin K-dependent, enzymatic carboxylation of some glutamate residues allows the modified protein to bind calcium. The activation peptide is cleaved by factor IXa (in the intrinsic pathway), or by factor VIIa (in the extrinsic pathway). In terms of processing, the iron and 2-oxoglutarate dependent 3-hydroxylation of aspartate and asparagine is (R) stereospecific within EGF domains. As to expression, liver and chorioallantoic membrane.

It is found in the secreted. It carries out the reaction Selective cleavage of Arg-|-Thr and then Arg-|-Ile bonds in prothrombin to form thrombin.. Factor Xa is a vitamin K-dependent glycoprotein that converts prothrombin to thrombin in the presence of factor Va, calcium and phospholipid during blood clotting. VAP cleaves the fusion proteins of Sendai virus, NDV, and influenza virus a at a specific single arginine-containing site, and plays a key role in the viral spreading in the allantoic sac. The polypeptide is Coagulation factor X (F10) (Gallus gallus (Chicken)).